Consider the following 156-residue polypeptide: Small ribosomal subunit protein uS7 (156 aa).

It belongs to the universal ribosomal protein uS7 family. As to quaternary structure, part of the 30S ribosomal subunit. Contacts proteins S9 and S11.

Its function is as follows. One of the primary rRNA binding proteins, it binds directly to 16S rRNA where it nucleates assembly of the head domain of the 30S subunit. Is located at the subunit interface close to the decoding center, probably blocks exit of the E-site tRNA. This is Small ribosomal subunit protein uS7 from Synechococcus elongatus (strain ATCC 33912 / PCC 7942 / FACHB-805) (Anacystis nidulans R2).